We begin with the raw amino-acid sequence, 514 residues long: ATP synthase subunit alpha (514 aa).

An ATP-binding site is contributed by 170–177 (GDRQIGKT).

The protein belongs to the ATPase alpha/beta chains family. In terms of assembly, F-type ATPases have 2 components, CF(1) - the catalytic core - and CF(0) - the membrane proton channel. CF(1) has five subunits: alpha(3), beta(3), gamma(1), delta(1), epsilon(1). CF(0) has three main subunits: a(1), b(2) and c(9-12). The alpha and beta chains form an alternating ring which encloses part of the gamma chain. CF(1) is attached to CF(0) by a central stalk formed by the gamma and epsilon chains, while a peripheral stalk is formed by the delta and b chains.

The protein resides in the cell inner membrane. The enzyme catalyses ATP + H2O + 4 H(+)(in) = ADP + phosphate + 5 H(+)(out). In terms of biological role, produces ATP from ADP in the presence of a proton gradient across the membrane. The alpha chain is a regulatory subunit. The chain is ATP synthase subunit alpha from Marinobacter nauticus (strain ATCC 700491 / DSM 11845 / VT8) (Marinobacter aquaeolei).